Here is a 447-residue protein sequence, read N- to C-terminus: Probable glycine dehydrogenase (decarboxylating) subunit 1 (447 aa).

It belongs to the GcvP family. N-terminal subunit subfamily. In terms of assembly, the glycine cleavage system is composed of four proteins: P, T, L and H. In this organism, the P 'protein' is a heterodimer of two subunits.

The enzyme catalyses N(6)-[(R)-lipoyl]-L-lysyl-[glycine-cleavage complex H protein] + glycine + H(+) = N(6)-[(R)-S(8)-aminomethyldihydrolipoyl]-L-lysyl-[glycine-cleavage complex H protein] + CO2. The glycine cleavage system catalyzes the degradation of glycine. The P protein binds the alpha-amino group of glycine through its pyridoxal phosphate cofactor; CO(2) is released and the remaining methylamine moiety is then transferred to the lipoamide cofactor of the H protein. In Bacillus cereus (strain AH187), this protein is Probable glycine dehydrogenase (decarboxylating) subunit 1.